Consider the following 360-residue polypeptide: NADH-quinone oxidoreductase subunit H (360 aa).

8 helical membrane passes run 22–42 (ITVG…IPLI), 97–117 (ALFY…WAVI), 130–150 (IGLL…IIAG), 170–190 (ISYE…SGSM), 208–228 (VFSW…ISAV), 255–275 (GFAF…IAAL), 292–312 (WGFI…AVLY), and 336–356 (VLIP…ISPL).

This sequence belongs to the complex I subunit 1 family. NDH-1 is composed of 14 different subunits. Subunits NuoA, H, J, K, L, M, N constitute the membrane sector of the complex.

It localises to the cell inner membrane. It catalyses the reaction a quinone + NADH + 5 H(+)(in) = a quinol + NAD(+) + 4 H(+)(out). Functionally, NDH-1 shuttles electrons from NADH, via FMN and iron-sulfur (Fe-S) centers, to quinones in the respiratory chain. The immediate electron acceptor for the enzyme in this species is believed to be ubiquinone. Couples the redox reaction to proton translocation (for every two electrons transferred, four hydrogen ions are translocated across the cytoplasmic membrane), and thus conserves the redox energy in a proton gradient. This subunit may bind ubiquinone. The chain is NADH-quinone oxidoreductase subunit H from Neisseria meningitidis serogroup C / serotype 2a (strain ATCC 700532 / DSM 15464 / FAM18).